The following is a 337-amino-acid chain: uncharacterized protein (337 aa).

Residues 291-314 (NKTRQCSNTKTTTKSTMTPINNGF) are disordered. A compositionally biased stretch (low complexity) spans 299 to 308 (TKTTTKSTMT).

This is an uncharacterized protein from Acanthamoeba polyphaga mimivirus (APMV).